The primary structure comprises 1068 residues: Carbamoyl phosphate synthase large chain (1068 aa).

The segment at 1–403 (MPKRTDINTI…SLQKALRGLE (403 aa)) is carboxyphosphate synthetic domain. Positions 129, 169, 175, 176, 208, 210, 215, 241, 242, 243, 285, and 299 each coordinate ATP. The region spanning 133-328 (KEAMEKIGLS…IAKVAAKLAV (196 aa)) is the ATP-grasp 1 domain. Mg(2+)-binding residues include Gln-285, Glu-299, and Asn-301. The Mn(2+) site is built by Gln-285, Glu-299, and Asn-301. Residues 404–548 (TGICGFNLMS…YSTYEEECES (145 aa)) form an oligomerization domain region. The segment at 549 to 930 (RPSDKKKIMI…AFLKAQLGAN (382 aa)) is carbamoyl phosphate synthetic domain. The region spanning 673-864 (QQILHKLHLK…LAKIAARVMA (192 aa)) is the ATP-grasp 2 domain. ATP-binding residues include Arg-709, His-748, Leu-750, Glu-755, Gly-780, Ile-781, His-782, Ser-783, Gln-823, and Glu-835. Positions 823, 835, and 837 each coordinate Mg(2+). Residues Gln-823, Glu-835, and Asn-837 each contribute to the Mn(2+) site. The MGS-like domain maps to 931–1068 (ERIPKTGKVF…SLQDLHQRLL (138 aa)). Positions 931–1068 (ERIPKTGKVF…SLQDLHQRLL (138 aa)) are allosteric domain.

The protein belongs to the CarB family. In terms of assembly, composed of two chains; the small (or glutamine) chain promotes the hydrolysis of glutamine to ammonia, which is used by the large (or ammonia) chain to synthesize carbamoyl phosphate. Tetramer of heterodimers (alpha,beta)4. It depends on Mg(2+) as a cofactor. Mn(2+) serves as cofactor.

It catalyses the reaction hydrogencarbonate + L-glutamine + 2 ATP + H2O = carbamoyl phosphate + L-glutamate + 2 ADP + phosphate + 2 H(+). The catalysed reaction is hydrogencarbonate + NH4(+) + 2 ATP = carbamoyl phosphate + 2 ADP + phosphate + 2 H(+). It participates in amino-acid biosynthesis; L-arginine biosynthesis; carbamoyl phosphate from bicarbonate: step 1/1. The protein operates within pyrimidine metabolism; UMP biosynthesis via de novo pathway; (S)-dihydroorotate from bicarbonate: step 1/3. Large subunit of the glutamine-dependent carbamoyl phosphate synthetase (CPSase). CPSase catalyzes the formation of carbamoyl phosphate from the ammonia moiety of glutamine, carbonate, and phosphate donated by ATP, constituting the first step of 2 biosynthetic pathways, one leading to arginine and/or urea and the other to pyrimidine nucleotides. The large subunit (synthetase) binds the substrates ammonia (free or transferred from glutamine from the small subunit), hydrogencarbonate and ATP and carries out an ATP-coupled ligase reaction, activating hydrogencarbonate by forming carboxy phosphate which reacts with ammonia to form carbamoyl phosphate. The chain is Carbamoyl phosphate synthase large chain from Pasteurella multocida (strain Pm70).